Consider the following 212-residue polypeptide: NADH dehydrogenase [ubiquinone] iron-sulfur protein 8, mitochondrial (212 aa).

A mitochondrion-targeting transit peptide spans 1-34 (MYRLSSSMLPRALAQAMRTGHLNGQSLHSSAVAA). 4Fe-4S ferredoxin-type domains are found at residues 104-133 (RRYPSGEERCIACKLCEAICPAQAITIEAE) and 143-172 (TRYDIDMTKCIYCGFCQEACPVDAIVEGPN). [4Fe-4S] cluster-binding residues include Cys-113, Cys-116, Cys-119, Cys-123, Cys-152, Cys-155, Cys-158, and Cys-162.

It belongs to the complex I 23 kDa subunit family. In terms of assembly, complex I is composed of 45 different subunits. This is a component of the iron-sulfur (IP) fragment of the enzyme. Interacts with RAB5IF. It depends on [4Fe-4S] cluster as a cofactor.

It localises to the mitochondrion inner membrane. The enzyme catalyses a ubiquinone + NADH + 5 H(+)(in) = a ubiquinol + NAD(+) + 4 H(+)(out). Functionally, core subunit of the mitochondrial membrane respiratory chain NADH dehydrogenase (Complex I) which catalyzes electron transfer from NADH through the respiratory chain, using ubiquinone as an electron acceptor. Essential for the catalytic activity and assembly of complex I. This Mus musculus (Mouse) protein is NADH dehydrogenase [ubiquinone] iron-sulfur protein 8, mitochondrial (Ndufs8).